The chain runs to 158 residues: 3-hydroxyacyl-[acyl-carrier-protein] dehydratase FabZ (158 aa).

His-62 is a catalytic residue.

It belongs to the thioester dehydratase family. FabZ subfamily.

The protein resides in the cytoplasm. The catalysed reaction is a (3R)-hydroxyacyl-[ACP] = a (2E)-enoyl-[ACP] + H2O. Involved in unsaturated fatty acids biosynthesis. Catalyzes the dehydration of short chain beta-hydroxyacyl-ACPs and long chain saturated and unsaturated beta-hydroxyacyl-ACPs. In Novosphingobium aromaticivorans (strain ATCC 700278 / DSM 12444 / CCUG 56034 / CIP 105152 / NBRC 16084 / F199), this protein is 3-hydroxyacyl-[acyl-carrier-protein] dehydratase FabZ.